The primary structure comprises 585 residues: Glutamate decarboxylase 2 (585 aa).

The disordered stretch occupies residues 1 to 25 (MASPGSGFWSFGSEDGSGDPENPGT). A phosphoserine mark is found at S3, S6, S10, S13, and S17. 2 S-palmitoyl cysteine lipidation sites follow: C30 and C45. A substrate-binding site is contributed by 181–183 (QLS). An N6-(pyridoxal phosphate)lysine modification is found at K396. Substrate is bound at residue R558.

This sequence belongs to the group II decarboxylase family. As to quaternary structure, homodimer. Requires pyridoxal 5'-phosphate as cofactor. Post-translationally, the N-terminus is blocked. Phosphorylated; which does not affect kinetic parameters or subcellular location. In terms of processing, palmitoylated; which is required for presynaptic clustering.

It localises to the cytoplasm. The protein localises to the cytosol. It is found in the cytoplasmic vesicle. Its subcellular location is the presynaptic cell membrane. The protein resides in the golgi apparatus membrane. The enzyme catalyses L-glutamate + H(+) = 4-aminobutanoate + CO2. Functionally, catalyzes the production of GABA. The protein is Glutamate decarboxylase 2 (Gad2) of Rattus norvegicus (Rat).